Here is a 111-residue protein sequence, read N- to C-terminus: Cytochrome c (111 aa).

N-acetylserine is present on Ser-1. Residues Cys-22, Cys-25, and His-26 each coordinate heme c. At Lys-80 the chain carries N6,N6,N6-trimethyllysine. Residue Met-88 coordinates heme c.

Belongs to the cytochrome c family. Post-translationally, binds 1 heme c group covalently per subunit.

The protein localises to the mitochondrion intermembrane space. In terms of biological role, electron carrier protein. The oxidized form of the cytochrome c heme group can accept an electron from the heme group of the cytochrome c1 subunit of cytochrome reductase. Cytochrome c then transfers this electron to the cytochrome oxidase complex, the final protein carrier in the mitochondrial electron-transport chain. The chain is Cytochrome c from Ulva intestinalis (Hollow green nori).